The primary structure comprises 641 residues: 1-deoxy-D-xylulose-5-phosphate synthase (641 aa).

Residues histidine 80 and 121-123 (GHS) contribute to the thiamine diphosphate site. A Mg(2+)-binding site is contributed by aspartate 152. Residues 153-154 (GS), asparagine 181, tyrosine 290, and glutamate 372 contribute to the thiamine diphosphate site. Asparagine 181 contributes to the Mg(2+) binding site.

It belongs to the transketolase family. DXPS subfamily. Homodimer. The cofactor is Mg(2+). Requires thiamine diphosphate as cofactor.

It catalyses the reaction D-glyceraldehyde 3-phosphate + pyruvate + H(+) = 1-deoxy-D-xylulose 5-phosphate + CO2. It participates in metabolic intermediate biosynthesis; 1-deoxy-D-xylulose 5-phosphate biosynthesis; 1-deoxy-D-xylulose 5-phosphate from D-glyceraldehyde 3-phosphate and pyruvate: step 1/1. In terms of biological role, catalyzes the acyloin condensation reaction between C atoms 2 and 3 of pyruvate and glyceraldehyde 3-phosphate to yield 1-deoxy-D-xylulose-5-phosphate (DXP). This Rhodobacter capsulatus (Rhodopseudomonas capsulata) protein is 1-deoxy-D-xylulose-5-phosphate synthase.